A 273-amino-acid polypeptide reads, in one-letter code: Tryptophan synthase alpha chain (273 aa).

Catalysis depends on proton acceptor residues Glu-49 and Asp-60.

This sequence belongs to the TrpA family. In terms of assembly, tetramer of two alpha and two beta chains.

It carries out the reaction (1S,2R)-1-C-(indol-3-yl)glycerol 3-phosphate + L-serine = D-glyceraldehyde 3-phosphate + L-tryptophan + H2O. It functions in the pathway amino-acid biosynthesis; L-tryptophan biosynthesis; L-tryptophan from chorismate: step 5/5. Its function is as follows. The alpha subunit is responsible for the aldol cleavage of indoleglycerol phosphate to indole and glyceraldehyde 3-phosphate. In Thiobacillus denitrificans (strain ATCC 25259 / T1), this protein is Tryptophan synthase alpha chain.